Reading from the N-terminus, the 189-residue chain is Mediator of RNA polymerase II transcription subunit 30 (189 aa).

A coiled-coil region spans residues 138-178 (SPESEDEIEKLEEQALSLRMEIAKKNVHVKELIDKLRELIA).

Belongs to the plant Mediator complex subunit 30 family. As to quaternary structure, component of the Mediator complex.

It is found in the nucleus. Component of the Mediator complex, a coactivator involved in the regulated transcription of nearly all RNA polymerase II-dependent genes. Mediator functions as a bridge to convey information from gene-specific regulatory proteins to the basal RNA polymerase II transcription machinery. The Mediator complex, having a compact conformation in its free form, is recruited to promoters by direct interactions with regulatory proteins and serves for the assembly of a functional preinitiation complex with RNA polymerase II and the general transcription factors. This chain is Mediator of RNA polymerase II transcription subunit 30 (MED30), found in Arabidopsis thaliana (Mouse-ear cress).